The primary structure comprises 388 residues: P2X receptor E (388 aa).

Residues 1–28 (MNFRNIDWDSLFSYSTIKIVRIRDKRLG) are Cytoplasmic-facing. A helical transmembrane segment spans residues 29 to 49 (ILHFAFLIGIILYIIVGTIFL). Over 50 to 312 (QKKYLVLESP…QLGQFDFQTM (263 aa)) the chain is Lumenal. The pore-forming motif stretch occupies residues 291–304 (RHGVRIIFIQTGQL). Residues 313 to 333 (LLTFVSGIGLVTAASLIVDII) traverse the membrane as a helical segment. Residues 334–388 (ATRIMPQRSRYQELKFQDSSINNTQKTPTNDHTPLLKDNEDTINENSYQNNSYEK) are Cytoplasmic-facing. Residues 349-388 (FQDSSINNTQKTPTNDHTPLLKDNEDTINENSYQNNSYEK) form a disordered region. Composition is skewed to polar residues over residues 350-365 (QDSS…TNDH) and 377-388 (NENSYQNNSYEK).

The protein belongs to the P2X receptor family.

Its subcellular location is the contractile vacuole membrane. Functionally, P2X receptors are ATP-gated ion channels that play a role in intracellular calcium signaling. Not required for the purinergic response to extracellular nucleotides. Not essential for osmoregulation. Inward currents evoked by intracellular ATP. ATP analog beta, gamma-imido-ATP is a weak partial agonist of p2xE. Exclusively selective for ATP over other nucleotides. Insensitive to copper and P2 receptor antagonists PPADS and suramin but strongly inhibited by sodium ions. More permeable to ammonium than either sodium or potassium ions and less permeable to choline. Permeable to calcium ions, but not chloride. In Dictyostelium discoideum (Social amoeba), this protein is P2X receptor E (p2xE).